Here is a 78-residue protein sequence, read N- to C-terminus: Small ribosomal subunit protein bS21A (78 aa).

Over residues 30-52 (MKARSAYEKPSEKRAREKGEAVR) the composition is skewed to basic and acidic residues. The interval 30–78 (MKARSAYEKPSEKRAREKGEAVRRQRKLARKKLQREGLLPAPKKAVRAR) is disordered. Over residues 53–62 (RQRKLARKKL) the composition is skewed to basic residues.

This sequence belongs to the bacterial ribosomal protein bS21 family.

This is Small ribosomal subunit protein bS21A from Rhizobium etli (strain ATCC 51251 / DSM 11541 / JCM 21823 / NBRC 15573 / CFN 42).